The chain runs to 177 residues: Apoptosis regulatory protein Siva (177 aa).

A Phosphotyrosine; by ABL2 modification is found at Y34. Residues 36-55 are interaction with BCL2L1 isoform Bcl-x(L) and inhibition of BCL2L1 anti-apoptotic activity; the sequence is REVFERTKQLLFQGAQAYRD.

In terms of assembly, binds through its N-terminal region to the C-terminus of CD27 and to PXMP2/PMP22. Binds to the C-terminus of TNFRSF18/GITR. Binds to BCL2L1/BCLX isoform Bcl-x(L) but not to BAX. It depends on Zn(2+) as a cofactor. In terms of tissue distribution, in post-ischemic kidney, found in cells lining the S3 segment of proximal tubules at 12 hours and 1 day post-ischemia. At five and seven days post-ischemia, found in epithelial cells of papillary proliferations in regenerating tubules.

The protein resides in the cytoplasm. It localises to the nucleus. Induces CD27-mediated apoptosis. Inhibits BCL2L1 isoform Bcl-x(L) anti-apoptotic activity. Inhibits activation of NF-kappa-B and promotes T-cell receptor-mediated apoptosis. The chain is Apoptosis regulatory protein Siva (Siva1) from Rattus norvegicus (Rat).